The sequence spans 157 residues: Phosphopantetheine adenylyltransferase (157 aa).

T8 contacts substrate. ATP-binding positions include 8-9 and H16; that span reads TF. Substrate-binding residues include K40, T72, and R86. Residues 87–89, E97, and 122–128 contribute to the ATP site; these read GLR and YSFLSSS.

Belongs to the bacterial CoaD family. As to quaternary structure, homohexamer. The cofactor is Mg(2+).

It localises to the cytoplasm. It catalyses the reaction (R)-4'-phosphopantetheine + ATP + H(+) = 3'-dephospho-CoA + diphosphate. It functions in the pathway cofactor biosynthesis; coenzyme A biosynthesis; CoA from (R)-pantothenate: step 4/5. Reversibly transfers an adenylyl group from ATP to 4'-phosphopantetheine, yielding dephospho-CoA (dPCoA) and pyrophosphate. This is Phosphopantetheine adenylyltransferase from Prochlorococcus marinus (strain MIT 9215).